Consider the following 464-residue polypeptide: Cysteine--tRNA ligase (464 aa).

C27 contacts Zn(2+). The short motif at 29 to 39 (PTVYNFFHIGN) is the 'HIGH' region element. Residues C207, H232, and E236 each coordinate Zn(2+). Residues 264 to 268 (KMSKS) carry the 'KMSKS' region motif. ATP is bound at residue K267.

This sequence belongs to the class-I aminoacyl-tRNA synthetase family. As to quaternary structure, monomer. Zn(2+) serves as cofactor.

It is found in the cytoplasm. It catalyses the reaction tRNA(Cys) + L-cysteine + ATP = L-cysteinyl-tRNA(Cys) + AMP + diphosphate. In Clostridium acetobutylicum (strain ATCC 824 / DSM 792 / JCM 1419 / IAM 19013 / LMG 5710 / NBRC 13948 / NRRL B-527 / VKM B-1787 / 2291 / W), this protein is Cysteine--tRNA ligase.